Consider the following 88-residue polypeptide: Small ribosomal subunit protein uS15c (88 aa).

Belongs to the universal ribosomal protein uS15 family. As to quaternary structure, part of the 30S ribosomal subunit.

Its subcellular location is the plastid. The protein localises to the chloroplast. This chain is Small ribosomal subunit protein uS15c (rps15), found in Capsella bursa-pastoris (Shepherd's purse).